The primary structure comprises 84 residues: Acyl carrier protein homolog (84 aa).

Residues 4 to 79 enclose the Carrier domain; the sequence is RDILLKIKEI…ELIAEVKHLI (76 aa). S39 carries the O-(pantetheine 4'-phosphoryl)serine modification.

4'-phosphopantetheine is transferred from CoA to a specific serine of the apo-ACP-like protein.

Its pathway is lipid metabolism; fatty acid biosynthesis. In terms of biological role, carrier of the growing fatty acid chain in fatty acid biosynthesis. This is Acyl carrier protein homolog from Mycoplasma pneumoniae (strain ATCC 29342 / M129 / Subtype 1) (Mycoplasmoides pneumoniae).